We begin with the raw amino-acid sequence, 662 residues long: tRNA 5-methylaminomethyl-2-thiouridine biosynthesis bifunctional protein MnmC (662 aa).

Residues 1-245 (MKQNAIQPAN…KREMLTGEMA (245 aa)) form a tRNA (mnm(5)s(2)U34)-methyltransferase region. The interval 270 to 662 (IGGGIASALL…RKLLKGKAVK (393 aa)) is FAD-dependent cmnm(5)s(2)U34 oxidoreductase.

It in the N-terminal section; belongs to the methyltransferase superfamily. tRNA (mnm(5)s(2)U34)-methyltransferase family. In the C-terminal section; belongs to the DAO family. Requires FAD as cofactor.

Its subcellular location is the cytoplasm. It carries out the reaction 5-aminomethyl-2-thiouridine(34) in tRNA + S-adenosyl-L-methionine = 5-methylaminomethyl-2-thiouridine(34) in tRNA + S-adenosyl-L-homocysteine + H(+). Its function is as follows. Catalyzes the last two steps in the biosynthesis of 5-methylaminomethyl-2-thiouridine (mnm(5)s(2)U) at the wobble position (U34) in tRNA. Catalyzes the FAD-dependent demodification of cmnm(5)s(2)U34 to nm(5)s(2)U34, followed by the transfer of a methyl group from S-adenosyl-L-methionine to nm(5)s(2)U34, to form mnm(5)s(2)U34. The sequence is that of tRNA 5-methylaminomethyl-2-thiouridine biosynthesis bifunctional protein MnmC from Klebsiella pneumoniae subsp. pneumoniae (strain ATCC 700721 / MGH 78578).